A 1157-amino-acid chain; its full sequence is ATP-dependent helicase/deoxyribonuclease subunit B (1157 aa).

The 299-residue stretch at 1-299 (MSIRFIIGRA…SHLEKYFFVR (299 aa)) folds into the UvrD-like helicase ATP-binding domain. Residue 8–15 (GRAGAGKT) participates in ATP binding. The 312-residue stretch at 279–590 (GNTARFKSPA…LVASLERSRN (312 aa)) folds into the UvrD-like helicase C-terminal domain. Cys-792, Cys-1112, Cys-1115, and Cys-1121 together coordinate [4Fe-4S] cluster.

Belongs to the helicase family. AddB/RexB type 1 subfamily. As to quaternary structure, heterodimer of AddA and AddB. Mg(2+) serves as cofactor. [4Fe-4S] cluster is required as a cofactor.

The heterodimer acts as both an ATP-dependent DNA helicase and an ATP-dependent, dual-direction single-stranded exonuclease. Recognizes the chi site generating a DNA molecule suitable for the initiation of homologous recombination. The AddB subunit has 5' -&gt; 3' nuclease activity but not helicase activity. This Pelotomaculum thermopropionicum (strain DSM 13744 / JCM 10971 / SI) protein is ATP-dependent helicase/deoxyribonuclease subunit B.